Here is a 311-residue protein sequence, read N- to C-terminus: Transmembrane protein 177 (311 aa).

Topologically, residues 1 to 17 are mitochondrial matrix; the sequence is MAGPLWRTAAFVQRHRT. Residues 18–38 form a helical membrane-spanning segment; sequence GLLVGSCAGLFGVPISYHLFP. Topologically, residues 39–166 are mitochondrial intermembrane; the sequence is DPVVQWLYQY…EVVYLESSTT (128 aa). Residues 167 to 187 form a helical membrane-spanning segment; it reads AVHALLAPACLAGTWALGVGA. At 188-197 the chain is on the mitochondrial matrix side; sequence KYTLGLHAGP. The chain crosses the membrane as a helical span at residues 198–218; that stretch reads MNLRAAFSLVAAVAGFVAYAF. The Mitochondrial intermembrane portion of the chain corresponds to 219–311; sequence SQDSLTHAVE…WRGMLNPGRS (93 aa).

This sequence belongs to the TMEM177 family. Found in a complex with COX20, COA6, MT-CO2/COX2, COX18, SCO1 and SCO2. Interacts with COX20. Interacts with COX1, MT-CO2/COX2, SCO1 and SCO2 in a COX20-dependent manner.

Its subcellular location is the mitochondrion inner membrane. Plays a role in the early steps of cytochrome c oxidase subunit II (MT-CO2/COX2) maturation and is required for the stabilization of COX20 and the newly synthesized MT-CO2/COX2 protein. In Homo sapiens (Human), this protein is Transmembrane protein 177 (TMEM177).